The chain runs to 134 residues: Small ribosomal subunit protein uS8c (134 aa).

It belongs to the universal ribosomal protein uS8 family. In terms of assembly, part of the 30S ribosomal subunit.

The protein resides in the plastid. It localises to the chloroplast. Functionally, one of the primary rRNA binding proteins, it binds directly to 16S rRNA central domain where it helps coordinate assembly of the platform of the 30S subunit. The sequence is that of Small ribosomal subunit protein uS8c (rps8) from Bigelowiella natans (Pedinomonas minutissima).